We begin with the raw amino-acid sequence, 724 residues long: Hyaluronan mediated motility receptor (724 aa).

2 disordered regions span residues 1–22 and 40–81; these read MSFP…PSPG and KSQR…QKND. A Phosphoserine modification is found at serine 20. 2 stretches are compositionally biased toward basic and acidic residues: residues 46–60 and 70–81; these read QQKE…DKDT and KSSESKESQKND. N-linked (GlcNAc...) asparagine glycans are attached at residues asparagine 133, asparagine 477, asparagine 567, and asparagine 588. Positions 365 to 546 are required for interaction with FAM83D; the sequence is EEMVKEKNLF…ITDLQNQLKQ (182 aa). Hyaluronic acid-binding regions lie at residues 635 to 645 and 657 to 666; these read KQKIKHVVKLK and KLRCQLAKKK. Threonine 703 is modified (phosphothreonine).

In terms of assembly, interacts with ANKRD26. Interacts with DYNLL1. Interacts with FAM83D/CHICA. Expressed in testis. Expressed in the breast.

Its subcellular location is the cell surface. It localises to the cytoplasm. The protein localises to the cytoskeleton. The protein resides in the spindle. In terms of biological role, receptor for hyaluronic acid (HA). Involved in cell motility. When hyaluronan binds to HMMR, the phosphorylation of a number of proteins, including PTK2/FAK1 occurs. May also be involved in cellular transformation and metastasis formation, and in regulating extracellular-regulated kinase (ERK) activity. May act as a regulator of adipogenisis. The protein is Hyaluronan mediated motility receptor (HMMR) of Homo sapiens (Human).